A 468-amino-acid polypeptide reads, in one-letter code: ATP synthase subunit beta (468 aa).

An ATP-binding site is contributed by 155 to 162; the sequence is GGAGVGKT.

The protein belongs to the ATPase alpha/beta chains family. As to quaternary structure, F-type ATPases have 2 components, CF(1) - the catalytic core - and CF(0) - the membrane proton channel. CF(1) has five subunits: alpha(3), beta(3), gamma(1), delta(1), epsilon(1). CF(0) has three main subunits: a(1), b(2) and c(9-12). The alpha and beta chains form an alternating ring which encloses part of the gamma chain. CF(1) is attached to CF(0) by a central stalk formed by the gamma and epsilon chains, while a peripheral stalk is formed by the delta and b chains.

It is found in the cell membrane. It carries out the reaction ATP + H2O + 4 H(+)(in) = ADP + phosphate + 5 H(+)(out). Functionally, produces ATP from ADP in the presence of a proton gradient across the membrane. The catalytic sites are hosted primarily by the beta subunits. The polypeptide is ATP synthase subunit beta (Enterococcus hirae (strain ATCC 9790 / DSM 20160 / JCM 8729 / LMG 6399 / NBRC 3181 / NCIMB 6459 / NCDO 1258 / NCTC 12367 / WDCM 00089 / R)).